The chain runs to 397 residues: Erythromycin C-12 hydroxylase (397 aa).

Residue 74–75 coordinates substrate; sequence HE. Residues histidine 81 and arginine 85 each contribute to the heme site. Glutamine 278 is a substrate binding site. A heme-binding site is contributed by arginine 279. The segment covering 307–322 has biased composition (basic and acidic residues); it reads RDSDAHDDPDRFDPSR. The tract at residues 307 to 326 is disordered; it reads RDSDAHDDPDRFDPSRKSGG. Heme is bound by residues histidine 337 and cysteine 339.

It belongs to the cytochrome P450 family. As to quaternary structure, monomer. The cofactor is heme b.

The enzyme catalyses erythromycin D + NADPH + O2 + H(+) = erythromycin C + NADP(+) + H2O. Its pathway is antibiotic biosynthesis; erythromycin biosynthesis. In terms of biological role, responsible for the C-12 hydroxylation of the macrolactone ring of erythromycin. Thus, EryK catalyzes the hydroxylation of erythromycin D (ErD) at the C-12 position to produce erythromycin C (ErC). Erythromycin B (ErB) is not a substrate for this enzyme. The protein is Erythromycin C-12 hydroxylase (eryK) of Saccharopolyspora erythraea (strain ATCC 11635 / DSM 40517 / JCM 4748 / NBRC 13426 / NCIMB 8594 / NRRL 2338).